The chain runs to 162 residues: uncharacterized protein (162 aa).

Residues 1 to 24 (MKRGVATLPVILVILLSVAAGAGA) form the signal peptide.

This is an uncharacterized protein from Mycobacterium bovis (strain ATCC BAA-935 / AF2122/97).